A 387-amino-acid chain; its full sequence is 3-ketoacyl-CoA thiolase (387 aa).

Residue Cys91 is the Acyl-thioester intermediate of the active site. Active-site proton acceptor residues include His343 and Cys373.

It belongs to the thiolase-like superfamily. Thiolase family. In terms of assembly, heterotetramer of two alpha chains (FadB) and two beta chains (FadA).

It is found in the cytoplasm. It carries out the reaction an acyl-CoA + acetyl-CoA = a 3-oxoacyl-CoA + CoA. It functions in the pathway lipid metabolism; fatty acid beta-oxidation. Functionally, catalyzes the final step of fatty acid oxidation in which acetyl-CoA is released and the CoA ester of a fatty acid two carbons shorter is formed. The protein is 3-ketoacyl-CoA thiolase of Escherichia coli O9:H4 (strain HS).